A 322-amino-acid chain; its full sequence is Large ribosomal subunit protein uL15m (322 aa).

The N-terminal 57 residues, 1–57 (MKAERQTGLRNSFTTVIGRKLINTFVPSMMLTSVAGNDIFFRGLFKSPVLAFQSYRY), are a transit peptide targeting the mitochondrion. Residues 69-99 (GSTKSFKRLGRGPSSGLGKTSGRGQKGQKAR) are disordered. Residues 81 to 93 (PSSGLGKTSGRGQ) show a composition bias toward gly residues.

It belongs to the universal ribosomal protein uL15 family. Component of the mitochondrial large ribosomal subunit (mt-LSU). Mature yeast 74S mitochondrial ribosomes consist of a small (37S) and a large (54S) subunit. The 37S small subunit contains a 15S ribosomal RNA (15S mt-rRNA) and 34 different proteins. The 54S large subunit contains a 21S rRNA (21S mt-rRNA) and 46 different proteins.

It is found in the mitochondrion. Its function is as follows. Component of the mitochondrial ribosome (mitoribosome), a dedicated translation machinery responsible for the synthesis of mitochondrial genome-encoded proteins, including at least some of the essential transmembrane subunits of the mitochondrial respiratory chain. The mitoribosomes are attached to the mitochondrial inner membrane and translation products are cotranslationally integrated into the membrane. The polypeptide is Large ribosomal subunit protein uL15m (MRPL10) (Saccharomyces cerevisiae (strain ATCC 204508 / S288c) (Baker's yeast)).